The following is a 335-amino-acid chain: MTEIATTSGISSVGLLSVGAYRPTRVVTNDEICENIDSSDEWIYSRTGIKTRRFAAPEESAASMAIEASREAIAKAALTGSDIDGVIVATSTHFLQTPACAPIVAAALGCQNVPAFDISAGCSGFGHALGIAADMIRGGSAATILVIGTEKLSPTVDMTDRSNCFIFVDGAASVLVGHSPIQGIGPTVWGSDGEQAAAIRQDIDWISHAENPAGPRPFLRMEGTAVFRWAAFEMGKVGQQAMDAAGVKPDEIDVFIPHQANSRINELLTKNLQLRPDAVIANDIEHTGNTSAASIPLAMAELLATGAAKPGDLALLIGYGAGLSYAAQVVRMPNS.

Active-site residues include cysteine 122 and histidine 258. The interval 259–263 (QANSR) is ACP-binding. Asparagine 289 is an active-site residue.

Belongs to the thiolase-like superfamily. FabH family. Homodimer.

The protein resides in the cytoplasm. The catalysed reaction is malonyl-[ACP] + dodecanoyl-CoA + H(+) = 3-oxotetradecanoyl-[ACP] + CO2 + CoA. It functions in the pathway lipid metabolism; fatty acid biosynthesis. Its pathway is lipid metabolism; mycolic acid biosynthesis. Its function is as follows. Catalyzes the condensation reaction of fatty acid synthesis by the addition to an acyl acceptor of two carbons from malonyl-ACP. Catalyzes the first condensation reaction which initiates fatty acid synthesis and may therefore play a role in governing the total rate of fatty acid production. Possesses both acetoacetyl-ACP synthase and acetyl transacylase activities. Its substrate specificity determines the biosynthesis of branched-chain and/or straight-chain of fatty acids. The sequence is that of Mycobacterial beta-ketoacyl-[acyl-carrier-protein] synthase III from Mycobacterium ulcerans (strain Agy99).